The chain runs to 237 residues: NAD-dependent protein deacylase (237 aa).

The Deacetylase sirtuin-type domain maps to 1–235 (MRVVVLSGAG…PGLLQRLPAL (235 aa)). 8-28 (GAGISAESDVPTFRDDKNGLW) lines the NAD(+) pocket. Y53 and R56 together coordinate substrate. An NAD(+)-binding site is contributed by 86 to 89 (QNVD). H104 acts as the Proton acceptor in catalysis. The Zn(2+) site is built by C112, C115, C138, and C140. NAD(+) is bound by residues 177-179 (GTS), 203-205 (NPE), and A221.

It belongs to the sirtuin family. Class III subfamily. The cofactor is Zn(2+).

It is found in the cytoplasm. It carries out the reaction N(6)-acetyl-L-lysyl-[protein] + NAD(+) + H2O = 2''-O-acetyl-ADP-D-ribose + nicotinamide + L-lysyl-[protein]. The catalysed reaction is N(6)-succinyl-L-lysyl-[protein] + NAD(+) + H2O = 2''-O-succinyl-ADP-D-ribose + nicotinamide + L-lysyl-[protein]. NAD-dependent lysine deacetylase and desuccinylase that specifically removes acetyl and succinyl groups on target proteins. Modulates the activities of several proteins which are inactive in their acylated form. The protein is NAD-dependent protein deacylase of Mycobacterium leprae (strain TN).